Here is an 88-residue protein sequence, read N- to C-terminus: UPF0298 protein BA_4142/GBAA_4142/BAS3844 (88 aa).

It belongs to the UPF0298 family.

It localises to the cytoplasm. This is UPF0298 protein BA_4142/GBAA_4142/BAS3844 from Bacillus anthracis.